The primary structure comprises 101 residues: Small ribosomal subunit protein uS14 (101 aa).

It belongs to the universal ribosomal protein uS14 family. Part of the 30S ribosomal subunit. Contacts proteins S3 and S10.

Functionally, binds 16S rRNA, required for the assembly of 30S particles and may also be responsible for determining the conformation of the 16S rRNA at the A site. The sequence is that of Small ribosomal subunit protein uS14 from Pelagibacter ubique (strain HTCC1062).